We begin with the raw amino-acid sequence, 391 residues long: S-adenosylmethionine synthase (391 aa).

H14 lines the ATP pocket. D16 contacts Mg(2+). E42 contributes to the K(+) binding site. L-methionine-binding residues include E55 and Q98. A flexible loop region spans residues 98–108; the sequence is QSVDIAMGVDE. ATP contacts are provided by residues 172–174, 238–239, D247, 253–254, A270, and K274; these read DGK, RF, and RK. D247 provides a ligand contact to L-methionine. Position 278 (K278) interacts with L-methionine.

This sequence belongs to the AdoMet synthase family. As to quaternary structure, homotetramer; dimer of dimers. Mg(2+) serves as cofactor. K(+) is required as a cofactor.

It localises to the cytoplasm. It catalyses the reaction L-methionine + ATP + H2O = S-adenosyl-L-methionine + phosphate + diphosphate. Its pathway is amino-acid biosynthesis; S-adenosyl-L-methionine biosynthesis; S-adenosyl-L-methionine from L-methionine: step 1/1. In terms of biological role, catalyzes the formation of S-adenosylmethionine (AdoMet) from methionine and ATP. The overall synthetic reaction is composed of two sequential steps, AdoMet formation and the subsequent tripolyphosphate hydrolysis which occurs prior to release of AdoMet from the enzyme. This chain is S-adenosylmethionine synthase, found in Clostridium botulinum (strain Langeland / NCTC 10281 / Type F).